We begin with the raw amino-acid sequence, 479 residues long: Aspartyl/glutamyl-tRNA(Asn/Gln) amidotransferase subunit B (479 aa).

The protein belongs to the GatB/GatE family. GatB subfamily. Heterotrimer of A, B and C subunits.

The enzyme catalyses L-glutamyl-tRNA(Gln) + L-glutamine + ATP + H2O = L-glutaminyl-tRNA(Gln) + L-glutamate + ADP + phosphate + H(+). It catalyses the reaction L-aspartyl-tRNA(Asn) + L-glutamine + ATP + H2O = L-asparaginyl-tRNA(Asn) + L-glutamate + ADP + phosphate + 2 H(+). Its function is as follows. Allows the formation of correctly charged Asn-tRNA(Asn) or Gln-tRNA(Gln) through the transamidation of misacylated Asp-tRNA(Asn) or Glu-tRNA(Gln) in organisms which lack either or both of asparaginyl-tRNA or glutaminyl-tRNA synthetases. The reaction takes place in the presence of glutamine and ATP through an activated phospho-Asp-tRNA(Asn) or phospho-Glu-tRNA(Gln). The protein is Aspartyl/glutamyl-tRNA(Asn/Gln) amidotransferase subunit B of Streptococcus pyogenes serotype M5 (strain Manfredo).